A 694-amino-acid chain; its full sequence is Methionine--tRNA ligase (694 aa).

The 'HIGH' region motif lies at 12-22 (PYANGPLHLGH). Positions 143, 146, 156, and 159 each coordinate Zn(2+). Positions 330-334 (KMSKS) match the 'KMSKS' region motif. ATP is bound at residue Lys-333. A compositionally biased stretch (low complexity) spans 550–575 (LAAPAAPATTSKAAPAKPDTKPAAAA). The disordered stretch occupies residues 550 to 580 (LAAPAAPATTSKAAPAKPDTKPAAAANPQSP). The region spanning 591-694 (DFAKLDLRIG…SGAQPGMPVR (104 aa)) is the tRNA-binding domain.

This sequence belongs to the class-I aminoacyl-tRNA synthetase family. MetG type 1 subfamily. As to quaternary structure, homodimer. It depends on Zn(2+) as a cofactor.

Its subcellular location is the cytoplasm. The catalysed reaction is tRNA(Met) + L-methionine + ATP = L-methionyl-tRNA(Met) + AMP + diphosphate. Is required not only for elongation of protein synthesis but also for the initiation of all mRNA translation through initiator tRNA(fMet) aminoacylation. The chain is Methionine--tRNA ligase from Xanthomonas oryzae pv. oryzae (strain MAFF 311018).